Consider the following 452-residue polypeptide: Neuromedin-K receptor (452 aa).

Over 1–71 (MASVPRGENW…TNQFVQPSWR (71 aa)) the chain is Extracellular. N-linked (GlcNAc...) asparagine glycosylation is found at Asn-9, Asn-23, Asn-40, and Asn-60. The helical transmembrane segment at 72–94 (IALWSLAYGLVVAVAVFGNLIVI) threads the bilayer. Residues 95–104 (WIILAHKRMR) lie on the Cytoplasmic side of the membrane. A helical membrane pass occupies residues 105–126 (TVTNYFLVNLAFSDASVAAFNT). Topologically, residues 127 to 146 (LINFIYGLHSEWYFGANYCR) are extracellular. An intrachain disulfide couples Cys-145 to Cys-220. The chain crosses the membrane as a helical span at residues 147–168 (FQNFFPITAVFASIYSMTAIAV). The Cytoplasmic portion of the chain corresponds to 169 to 188 (DRYMAIIDPLKPRLSATATK). Residues 189–209 (IVIGSIWILAFLLAFPQCLYS) traverse the membrane as a helical segment. The Extracellular portion of the chain corresponds to 210–232 (KIKVMPGRTLCYVQWPEGPKQHF). Residues 233–257 (TYHIIVIILVYCFPLLIMGVTYTIV) form a helical membrane-spanning segment. Residues 258-286 (GITLWGGEIPGDTCDKYHEQLKAKRKVVK) are Cytoplasmic-facing. A helical transmembrane segment spans residues 287-308 (MMIIVVVTFAICWLPYHVYFIL). At 309-321 (TAIYQQLNRWKYI) the chain is on the extracellular side. The helical transmembrane segment at 322–346 (QQVYLASFWLAMSSTMYNPIIYCCL) threads the bilayer. Over 347 to 452 (NKRFRAGFKR…SPYTSVDEYS (106 aa)) the chain is Cytoplasmic. A lipid anchor (S-palmitoyl cysteine) is attached at Cys-361. The interval 400–452 (FDPNDGDPTKSSRKKRAVPRDPSANGCSHRGSKSASTTSSFISSPYTSVDEYS) is disordered. The segment covering 432–452 (KSASTTSSFISSPYTSVDEYS) has biased composition (low complexity).

Belongs to the G-protein coupled receptor 1 family. Post-translationally, the anchoring of this receptor to the plasma membrane is probably mediated by the palmitoylation of a cysteine residue.

It localises to the cell membrane. In terms of biological role, this is a receptor for the tachykinin neuropeptide neuromedin-K (neurokinin B). It is associated with G proteins that activate a phosphatidylinositol-calcium second messenger system. The rank order of affinity of this receptor to tachykinins is: neuromedin-K &gt; substance K &gt; substance P. This chain is Neuromedin-K receptor (Tacr3), found in Rattus norvegicus (Rat).